We begin with the raw amino-acid sequence, 68 residues long: MWIESDAGVAIDRHARGACSLGEAGCATYCFYQGKHHGGCCGENYTKCLGTCYCNGSGYEYRCHSCDL.

A signal peptide spans 1 to 16; that stretch reads MWIESDAGVAIDRHAR.

In terms of processing, contains 5 disulfide bonds. As to expression, expressed in hemolymph, gills, digestive gland, foot, adductor muscles and mantle.

The protein localises to the secreted. Its subcellular location is the target cell membrane. Shows antibacterial activity against numerous Gram-positive bacteria. It selectively inhibits peptidoglycan biosynthesis through complex formation with the cell wall precursor lipid II (1:1 molar ratio) thus inhibiting cell wall synthesis. This is Defensin gallicin from Mytilus galloprovincialis (Mediterranean mussel).